The sequence spans 660 residues: MSAIESVLHERRQFAPPAAVEKAAAISGMAAYRALAEEAERDYEGFWARLARETLEWRKPFGKALDETNAPFYKWFDDGELNASYNCLDRHVAAGLGERIAVIFEADDGTVARVTYADLLARVSRFANALKKRGIGRGDRVVIYIPMSVEGIVAMQACARIGATHSVVFGGFSSKSLHERIVDVGATALVTADEQMRGGKTLPLKSIADEALAMGGCDAVKTVVVYRRTGGNVDWHAGRDVWMHEIVANESDACEPEWVGAEHPLFILYTSGSTGKPKGVQHSTAGYLLWVAQTMKWTFDWKPDDVFWCTADIGWVTGHSYITYGPLAVGATQVVFEGVPTYPNAGRFWKMIGDHKVSVFYTAPTAIRSLIKAAEADEHVHPKSYDLSSLRIIGTVGEPINPEAWIWYHKNVGQERCPIVDTWWQTETGGHMITPLPGATPTVPGSCTLPLPGIMAAVVDETGQDVPNGQGGILVVKRPWPAMARTIWGDPERFKKSYFPDELGGRLYLAGDGTVRDKETGYFTIMGRIDDVLNVSGHRLGTMEIESALVSHELVAEAAVVGRPDDTTGEAVVAFVVLKRSRPEGEEAAALAKTLRDWVGKEIGPIAKPKDIRFGDNLPKTRSGKIMRRLLRSLAKGEAITQDTSTLENPAILEQLAEVR.

CoA contacts are provided by residues 197–200 (RGGK) and threonine 317. ATP contacts are provided by residues 397 to 399 (GEP), 421 to 426 (DTWWQT), aspartate 512, and arginine 528. Serine 536 serves as a coordination point for CoA. Arginine 539 is an ATP binding site. Residues valine 550, histidine 552, and valine 555 each coordinate Mg(2+). Lysine 625 is modified (N6-acetyllysine).

This sequence belongs to the ATP-dependent AMP-binding enzyme family. Mg(2+) is required as a cofactor. In terms of processing, acetylated. Deacetylation by the SIR2-homolog deacetylase activates the enzyme.

It catalyses the reaction acetate + ATP + CoA = acetyl-CoA + AMP + diphosphate. Catalyzes the conversion of acetate into acetyl-CoA (AcCoA), an essential intermediate at the junction of anabolic and catabolic pathways. AcsA undergoes a two-step reaction. In the first half reaction, AcsA combines acetate with ATP to form acetyl-adenylate (AcAMP) intermediate. In the second half reaction, it can then transfer the acetyl group from AcAMP to the sulfhydryl group of CoA, forming the product AcCoA. In Burkholderia thailandensis (strain ATCC 700388 / DSM 13276 / CCUG 48851 / CIP 106301 / E264), this protein is Acetyl-coenzyme A synthetase.